Reading from the N-terminus, the 464-residue chain is 3-isopropylmalate dehydratase large subunit (464 aa).

[4Fe-4S] cluster-binding residues include Cys-345, Cys-405, and Cys-408.

It belongs to the aconitase/IPM isomerase family. LeuC type 1 subfamily. Heterodimer of LeuC and LeuD. It depends on [4Fe-4S] cluster as a cofactor.

The enzyme catalyses (2R,3S)-3-isopropylmalate = (2S)-2-isopropylmalate. It functions in the pathway amino-acid biosynthesis; L-leucine biosynthesis; L-leucine from 3-methyl-2-oxobutanoate: step 2/4. Catalyzes the isomerization between 2-isopropylmalate and 3-isopropylmalate, via the formation of 2-isopropylmaleate. The protein is 3-isopropylmalate dehydratase large subunit of Bacteroides fragilis (strain ATCC 25285 / DSM 2151 / CCUG 4856 / JCM 11019 / LMG 10263 / NCTC 9343 / Onslow / VPI 2553 / EN-2).